We begin with the raw amino-acid sequence, 365 residues long: Ferrochelatase (365 aa).

Residues histidine 211 and glutamate 292 each coordinate Fe cation.

Belongs to the ferrochelatase family.

Its subcellular location is the cytoplasm. It catalyses the reaction heme b + 2 H(+) = protoporphyrin IX + Fe(2+). The protein operates within porphyrin-containing compound metabolism; protoheme biosynthesis; protoheme from protoporphyrin-IX: step 1/1. Its function is as follows. Catalyzes the ferrous insertion into protoporphyrin IX. The chain is Ferrochelatase from Aromatoleum aromaticum (strain DSM 19018 / LMG 30748 / EbN1) (Azoarcus sp. (strain EbN1)).